A 287-amino-acid polypeptide reads, in one-letter code: Formamidopyrimidine-DNA glycosylase (287 aa).

The active-site Schiff-base intermediate with DNA is the proline 2. Glutamate 3 functions as the Proton donor in the catalytic mechanism. Lysine 58 functions as the Proton donor; for beta-elimination activity in the catalytic mechanism. The DNA site is built by histidine 104, arginine 123, and arginine 166. An FPG-type zinc finger spans residues arginine 251–valine 287. Arginine 277 serves as the catalytic Proton donor; for delta-elimination activity.

The protein belongs to the FPG family. Monomer. Requires Zn(2+) as cofactor.

The catalysed reaction is Hydrolysis of DNA containing ring-opened 7-methylguanine residues, releasing 2,6-diamino-4-hydroxy-5-(N-methyl)formamidopyrimidine.. It carries out the reaction 2'-deoxyribonucleotide-(2'-deoxyribose 5'-phosphate)-2'-deoxyribonucleotide-DNA = a 3'-end 2'-deoxyribonucleotide-(2,3-dehydro-2,3-deoxyribose 5'-phosphate)-DNA + a 5'-end 5'-phospho-2'-deoxyribonucleoside-DNA + H(+). Its function is as follows. Involved in base excision repair of DNA damaged by oxidation or by mutagenic agents. Acts as a DNA glycosylase that recognizes and removes damaged bases. Has a preference for oxidized purines, such as 7,8-dihydro-8-oxoguanine (8-oxoG). Has AP (apurinic/apyrimidinic) lyase activity and introduces nicks in the DNA strand. Cleaves the DNA backbone by beta-delta elimination to generate a single-strand break at the site of the removed base with both 3'- and 5'-phosphates. This chain is Formamidopyrimidine-DNA glycosylase, found in Caulobacter vibrioides (strain ATCC 19089 / CIP 103742 / CB 15) (Caulobacter crescentus).